Here is a 503-residue protein sequence, read N- to C-terminus: Poxin-Schlafen (503 aa).

The active-site Proton donor is histidine 15. Tyrosine 136 functions as the Shared with catalytic histidine of dimeric partner in the catalytic mechanism. Lysine 140 acts as the Proton acceptor; shared with catalytic histidine of dimeric partner in catalysis.

This sequence in the N-terminal section; belongs to the poxin family. In the C-terminal section; belongs to the Schlafen protein family. Subgroup poxviridae B3 subfamily. Homodimer.

It carries out the reaction 2',3'-cGAMP + H2O = Gp(2'-5')Ap(3') + H(+). Nuclease that is responsible for viral evasion of host cGAS-STING innate immunity. Cleaves 2',3'-cGAMP which is produced by host cGAS following recognition of cytosolic DNA and blocks the subsequent 2',3'-cGAMP-mediated activation of TMEM173/STING, which normally spreads to adjacent cells and activates the interferon and NF-kappa-B immune responses. This Cynomys gunnisoni (Gunnison's prairie dog) protein is Poxin-Schlafen (OPG188).